A 369-amino-acid polypeptide reads, in one-letter code: uncharacterized protein (369 aa).

This sequence to A.pernix APE1276 and APE1804.

This is an uncharacterized protein from Saccharolobus solfataricus (strain ATCC 35092 / DSM 1617 / JCM 11322 / P2) (Sulfolobus solfataricus).